The sequence spans 177 residues: Large ribosomal subunit protein uL6 (177 aa).

Belongs to the universal ribosomal protein uL6 family. In terms of assembly, part of the 50S ribosomal subunit.

Functionally, this protein binds to the 23S rRNA, and is important in its secondary structure. It is located near the subunit interface in the base of the L7/L12 stalk, and near the tRNA binding site of the peptidyltransferase center. In Halorhodospira halophila (strain DSM 244 / SL1) (Ectothiorhodospira halophila (strain DSM 244 / SL1)), this protein is Large ribosomal subunit protein uL6.